We begin with the raw amino-acid sequence, 318 residues long: Petal death protein (318 aa).

Residues methionine 1–proline 3 constitute a propeptide, removed in mature form. The tract at residues methionine 1–serine 24 is disordered. 3 residues coordinate Mg(2+): aspartate 107, aspartate 109, and lysine 142.

The protein belongs to the isocitrate lyase/PEP mutase superfamily. As to quaternary structure, homodimer and homotetramer formed by a dimer of homodimer. Requires Mg(2+) as cofactor. Mn(2+) serves as cofactor. Fe(2+) is required as a cofactor. It depends on Co(2+) as a cofactor. As to expression, accumulates in senescing flower petals.

It carries out the reaction oxaloacetate + H2O = oxalate + acetate + H(+). Functionally, catalyzes cleavage of the C(2)-C(3) bond in oxaloacetate and in (2R)-alkyl malate derivatives to form oxalate and acetate, and alkyl carboxylates and R-ketocarboxylates, respectively. The polypeptide is Petal death protein (Dianthus caryophyllus (Carnation)).